A 308-amino-acid polypeptide reads, in one-letter code: Ribosomal protein uL3 glutamine methyltransferase (308 aa).

The protein belongs to the protein N5-glutamine methyltransferase family. PrmB subfamily.

It catalyses the reaction L-glutaminyl-[ribosomal protein uL3] + S-adenosyl-L-methionine = N(5)-methyl-L-glutaminyl-[ribosomal protein uL3] + S-adenosyl-L-homocysteine + H(+). Functionally, methylates large ribosomal subunit protein uL3 on a specific glutamine residue. This Xanthomonas campestris pv. campestris (strain ATCC 33913 / DSM 3586 / NCPPB 528 / LMG 568 / P 25) protein is Ribosomal protein uL3 glutamine methyltransferase.